Here is a 55-residue protein sequence, read N- to C-terminus: Large ribosomal subunit protein bL33 (55 aa).

It belongs to the bacterial ribosomal protein bL33 family.

The protein is Large ribosomal subunit protein bL33 of Sphingopyxis alaskensis (strain DSM 13593 / LMG 18877 / RB2256) (Sphingomonas alaskensis).